The following is a 310-amino-acid chain: tRNA dimethylallyltransferase (310 aa).

14-21 (GPTASGKT) contributes to the ATP binding site. 16–21 (TASGKT) serves as a coordination point for substrate. Interaction with substrate tRNA stretches follow at residues 39 to 42 (DSAL), 163 to 167 (QRLSR), and 244 to 249 (RCVGYR).

This sequence belongs to the IPP transferase family. In terms of assembly, monomer. Requires Mg(2+) as cofactor.

The catalysed reaction is adenosine(37) in tRNA + dimethylallyl diphosphate = N(6)-dimethylallyladenosine(37) in tRNA + diphosphate. Functionally, catalyzes the transfer of a dimethylallyl group onto the adenine at position 37 in tRNAs that read codons beginning with uridine, leading to the formation of N6-(dimethylallyl)adenosine (i(6)A). In Aeromonas salmonicida (strain A449), this protein is tRNA dimethylallyltransferase.